Consider the following 90-residue polypeptide: Nodulation protein NolS (90 aa).

Its function is as follows. Involved in nodulation of a particular host, M.lupulina. The protein is Nodulation protein NolS (nolS) of Sinorhizobium meliloti (strain Sm2011 / Rm2011 / 2011).